We begin with the raw amino-acid sequence, 275 residues long: Large ribosomal subunit protein uL2cz (275 aa).

Disordered regions lie at residues 1 to 20 (MAIH…AVDS) and 225 to 275 (NPVD…RRSK).

Belongs to the universal ribosomal protein uL2 family. Part of the 50S ribosomal subunit.

It localises to the plastid. Its subcellular location is the chloroplast. This Populus alba (White poplar) protein is Large ribosomal subunit protein uL2cz (rpl2-A).